A 149-amino-acid polypeptide reads, in one-letter code: Aquaporin-like protein 2 (149 aa).

Residues 1–35 (MSNESNDLEKNISHLDPTGVDNAYIPPEQPETKHS) form a disordered region. The Cytoplasmic segment spans residues 1–47 (MSNESNDLEKNISHLDPTGVDNAYIPPEQPETKHSRFNIDRGTLRNH). The chain crosses the membrane as a helical span at residues 48–68 (FIAAVGEFCGTFMFLWCAYVI). Over 69–89 (CNVANHDVALTTEPEGSHPGQ) the chain is Extracellular. Residues 90–110 (LIMIALGFGFSVMFSIWCFWW) traverse the membrane as a helical segment. Residues 111-149 (GFEPSRFSLFVFGQSHLTSQMCSDVVSSDHCWDGCWWCR) lie on the Cytoplasmic side of the membrane.

It belongs to the MIP/aquaporin (TC 1.A.8) family.

It is found in the endoplasmic reticulum membrane. Its subcellular location is the cell membrane. Its function is as follows. Water channel required to facilitate the transport of water across membranes. Involved in freeze tolerance, osmotolerance and cell flocculation in liquid cultures. Is non-functional in most laboratory strains. The polypeptide is Aquaporin-like protein 2 (AQY2-2) (Saccharomyces cerevisiae (strain Lalvin EC1118 / Prise de mousse) (Baker's yeast)).